Consider the following 372-residue polypeptide: Cytochrome b (372 aa).

4 consecutive transmembrane segments (helical) span residues 25–45 (FGSMLLTCLILQIMTGFFLAI), 69–90 (WIMQNLHAIGASLFFICIYIHI), 105–125 (WLSGTTLLIILMATAFFGYVL), and 170–190 (FFALHFILPFTIISLSSIHII). Heme b is bound by residues histidine 75 and histidine 89. The heme b site is built by histidine 174 and histidine 188. Histidine 193 lines the a ubiquinone pocket. Transmembrane regions (helical) follow at residues 218–238 (YKDMLMIIIMTAILFLILSFS), 280–300 (LGGTLALVMSVMILTTAPFTH), 312–332 (LSQIVFWTLIATFITITWTAT), and 339–358 (FISISQTASIFYFSFFIMNP).

It belongs to the cytochrome b family. In terms of assembly, the cytochrome bc1 complex contains 3 respiratory subunits (MT-CYB, CYC1 and UQCRFS1), 2 core proteins (UQCRC1 and UQCRC2) and probably 6 low-molecular weight proteins. Requires heme b as cofactor.

It localises to the mitochondrion inner membrane. Functionally, component of the ubiquinol-cytochrome c reductase complex (complex III or cytochrome b-c1 complex) that is part of the mitochondrial respiratory chain. The b-c1 complex mediates electron transfer from ubiquinol to cytochrome c. Contributes to the generation of a proton gradient across the mitochondrial membrane that is then used for ATP synthesis. This is Cytochrome b (MT-CYB) from Walterinnesia aegyptia (Desert black snake).